The chain runs to 890 residues: Kinesin-like protein KIN-7C, mitochondrial (890 aa).

The span at 1-13 (MSATRSQRSSTIS) shows a compositional bias: polar residues. The tract at residues 1-66 (MSATRSQRSS…TSSAAASSTA (66 aa)) is disordered. A mitochondrion-targeting transit peptide spans 1 to 73 (MSATRSQRSS…STAVASTKLK (73 aa)). The segment covering 40 to 66 (SPVTSSSPLLRSSPSPSTSSAAASSTA) has biased composition (low complexity). Residues 75-394 (NITVTIRFRP…LKFAQRCKHV (320 aa)) enclose the Kinesin motor domain. 155-162 (GVTSSGKT) is an ATP binding site. A coiled-coil region spans residues 395–468 (EIKASRNKIM…MGRIQRLTKL (74 aa)). The segment at 511–595 (DGAVSTVSEH…TTRRENAAAI (85 aa)) is disordered. Low complexity predominate over residues 569–579 (SQASGSPSSSS). Coiled-coil stretches lie at residues 664 to 693 (HIRDQIQKLEDEISEKKDQIRVLEQQIIEI) and 729 to 765 (ADNRILQEQLQMTKSENAEMQETIILLRQQLDSLAER). Positions 768-797 (TQQIAGDESSGKNIHNRNGEESEIYSGAGT) are disordered. Positions 818–884 (NETALNSQAL…AEEVTRLCNE (67 aa)) form a coiled coil.

It belongs to the TRAFAC class myosin-kinesin ATPase superfamily. Kinesin family. KIN-7 subfamily.

The protein resides in the mitochondrion. The protein is Kinesin-like protein KIN-7C, mitochondrial of Arabidopsis thaliana (Mouse-ear cress).